The primary structure comprises 503 residues: MLDLTFETPKPKTIAGAKHDWELVIGMEVHAQVASQAKLFSGASTAFGAEPNSNVSFVDAAMPGMLPVINEFCVEQAVRTGLGLKAEINLKSAFDRKNYFYPDLPQGYQISQLYHPIVGEGEVLVEMGDGTARRVRIERIHMEQDAGKSIHDMDPNMSFVDLNRTGVCLMEIVSRPDIRGPEEAAAYIAKLRQILRYLGTCDGNMQNGNLRADVNVSICRPGAYEKYQETQDFSHLGTRCEIKNMNSMRFIQAAIEYEARRQIAIVEAGGEVDQETRLYDPDKNETRSMRSKEEAHDYRYFPDPDLLPLEIEQAWVDDIAASLPELPDDKKARFIKEFGLTDYDASVLTAEVESARYFEEVAQGRNGKLAANWVINELFGRLKKEDHDITDSPVSPSQLGGIIDLIASDAISGKIAKDLFEIVYTEGGDPAEIVEARGMKQVTDTGAIEAALDEIIAANPAQVEKAKVNPKLAGWFVGQVMKATGGKANPGVVNQMVSKKLNG.

The protein belongs to the GatB/GatE family. GatB subfamily. As to quaternary structure, heterotrimer of A, B and C subunits.

The catalysed reaction is L-glutamyl-tRNA(Gln) + L-glutamine + ATP + H2O = L-glutaminyl-tRNA(Gln) + L-glutamate + ADP + phosphate + H(+). It catalyses the reaction L-aspartyl-tRNA(Asn) + L-glutamine + ATP + H2O = L-asparaginyl-tRNA(Asn) + L-glutamate + ADP + phosphate + 2 H(+). In terms of biological role, allows the formation of correctly charged Asn-tRNA(Asn) or Gln-tRNA(Gln) through the transamidation of misacylated Asp-tRNA(Asn) or Glu-tRNA(Gln) in organisms which lack either or both of asparaginyl-tRNA or glutaminyl-tRNA synthetases. The reaction takes place in the presence of glutamine and ATP through an activated phospho-Asp-tRNA(Asn) or phospho-Glu-tRNA(Gln). In Ruegeria pomeroyi (strain ATCC 700808 / DSM 15171 / DSS-3) (Silicibacter pomeroyi), this protein is Aspartyl/glutamyl-tRNA(Asn/Gln) amidotransferase subunit B.